The sequence spans 241 residues: Large ribosomal subunit protein uL3 (241 aa).

Disordered stretches follow at residues 140 to 162 and 217 to 241; these read SHRSIGSTGGRQDPGKTFKNKKM and PLPGKFRENGASAPATEAPAAEETA. Q151 carries the N5-methylglutamine modification. Residues 229–241 are compositionally biased toward low complexity; it reads APATEAPAAEETA.

The protein belongs to the universal ribosomal protein uL3 family. In terms of assembly, part of the 50S ribosomal subunit. Forms a cluster with proteins L14 and L19. Post-translationally, methylated by PrmB.

In terms of biological role, one of the primary rRNA binding proteins, it binds directly near the 3'-end of the 23S rRNA, where it nucleates assembly of the 50S subunit. In Methylobacterium radiotolerans (strain ATCC 27329 / DSM 1819 / JCM 2831 / NBRC 15690 / NCIMB 10815 / 0-1), this protein is Large ribosomal subunit protein uL3.